The sequence spans 365 residues: MKKRFPSTLFLFYRRVTIAISLEGILGWGWLGSLLSKVFAFLVACWNRFSWSTPYRARSTVISVGNIVVGGAGKTPTVLWLAEALRLRGYSCGVLSRGYKSQSSRQKKLTVVDSKVHSASYVGDEPLLMAEKLPEGSVWVHKDRRISAARAAEKFGILLLDDGLQYRKLHKDVEIAVVNGQDPLGGRAFFPKGRLRDFPLRLKTVDAIIVNGGGKEAGTVVKRVSNAPQIFVKPTIASVVWTHNGERIPKEALRELRVGVFCGLGFPQGFLNMLREEGIHILGKYLLPDHAAITKKELNYFCQQMAMRQGQGLLCTEKDSVKLPRLSGEVSLLPIAKVEMRLSVNQDDTLSLLNMIEQIHKNRGN.

An ATP-binding site is contributed by 68–75 (VVGGAGKT).

It belongs to the LpxK family.

It catalyses the reaction a lipid A disaccharide + ATP = a lipid IVA + ADP + H(+). It functions in the pathway glycolipid biosynthesis; lipid IV(A) biosynthesis; lipid IV(A) from (3R)-3-hydroxytetradecanoyl-[acyl-carrier-protein] and UDP-N-acetyl-alpha-D-glucosamine: step 6/6. Functionally, transfers the gamma-phosphate of ATP to the 4'-position of a tetraacyldisaccharide 1-phosphate intermediate (termed DS-1-P) to form tetraacyldisaccharide 1,4'-bis-phosphate (lipid IVA). The sequence is that of Tetraacyldisaccharide 4'-kinase from Chlamydia pneumoniae (Chlamydophila pneumoniae).